A 112-amino-acid polypeptide reads, in one-letter code: Putative pterin-4-alpha-carbinolamine dehydratase (112 aa).

Belongs to the pterin-4-alpha-carbinolamine dehydratase family.

It catalyses the reaction (4aS,6R)-4a-hydroxy-L-erythro-5,6,7,8-tetrahydrobiopterin = (6R)-L-erythro-6,7-dihydrobiopterin + H2O. This is Putative pterin-4-alpha-carbinolamine dehydratase from Shewanella pealeana (strain ATCC 700345 / ANG-SQ1).